A 268-amino-acid polypeptide reads, in one-letter code: Undecaprenyl-diphosphatase (268 aa).

8 consecutive transmembrane segments (helical) span residues 4-24, 50-70, 84-104, 109-129, 144-164, 185-205, 214-234, and 247-267; these read STTLVALVLGLLEGLTEFIPV, IQLGAVLAVLTVYAAKLVSVI, VAVLVAFLPAVVIGVLAHGFI, FETPILIATMLILGGIVLLFV, LPLNVALKIGFIQCLAMVPGV, AEFSFFLSMPTMAGAFAFDLF, SALGEIAVGFVAAFVAAVLVV, and ALFGWWRIAVGSVALAALLAG.

The protein belongs to the UppP family.

The protein resides in the cell inner membrane. It carries out the reaction di-trans,octa-cis-undecaprenyl diphosphate + H2O = di-trans,octa-cis-undecaprenyl phosphate + phosphate + H(+). In terms of biological role, catalyzes the dephosphorylation of undecaprenyl diphosphate (UPP). Confers resistance to bacitracin. In Cereibacter sphaeroides (strain ATCC 17029 / ATH 2.4.9) (Rhodobacter sphaeroides), this protein is Undecaprenyl-diphosphatase.